Reading from the N-terminus, the 177-residue chain is ATP synthase subunit delta (177 aa).

It belongs to the ATPase delta chain family. In terms of assembly, F-type ATPases have 2 components, F(1) - the catalytic core - and F(0) - the membrane proton channel. F(1) has five subunits: alpha(3), beta(3), gamma(1), delta(1), epsilon(1). F(0) has three main subunits: a(1), b(2) and c(10-14). The alpha and beta chains form an alternating ring which encloses part of the gamma chain. F(1) is attached to F(0) by a central stalk formed by the gamma and epsilon chains, while a peripheral stalk is formed by the delta and b chains.

The protein resides in the cell inner membrane. Functionally, f(1)F(0) ATP synthase produces ATP from ADP in the presence of a proton or sodium gradient. F-type ATPases consist of two structural domains, F(1) containing the extramembraneous catalytic core and F(0) containing the membrane proton channel, linked together by a central stalk and a peripheral stalk. During catalysis, ATP synthesis in the catalytic domain of F(1) is coupled via a rotary mechanism of the central stalk subunits to proton translocation. Its function is as follows. This protein is part of the stalk that links CF(0) to CF(1). It either transmits conformational changes from CF(0) to CF(1) or is implicated in proton conduction. This is ATP synthase subunit delta from Actinobacillus pleuropneumoniae serotype 7 (strain AP76).